We begin with the raw amino-acid sequence, 289 residues long: MAAITAAMVKELRERTGLGMMECKKALVEAEGNVETAIEELRKSSGLKAAKKAGRTAAEGVSLVKVSDDNTVAFILEVNSETDFVARDDNFMNFANDVLNVAFEKGETDVAKLMEGDLEAKREALVQKIGENITVRRIIKVEGPVVGGYVHSNNKIASVVALTAGNEELARDIAMHVAAVNPRVGKPDDMPAEELEKEKEIIKAQPDMEGKPAEIVEKMMGGRIKKFLAENSLVEQPFVKNPDQKVGDLIKSAGGDLVGFIRLEVGEGIEKEEVDFAAEVAAAAGTGKA.

The interval 82 to 85 is involved in Mg(2+) ion dislocation from EF-Tu; the sequence is TDFV.

This sequence belongs to the EF-Ts family.

It is found in the cytoplasm. In terms of biological role, associates with the EF-Tu.GDP complex and induces the exchange of GDP to GTP. It remains bound to the aminoacyl-tRNA.EF-Tu.GTP complex up to the GTP hydrolysis stage on the ribosome. The protein is Elongation factor Ts of Marinobacter nauticus (strain ATCC 700491 / DSM 11845 / VT8) (Marinobacter aquaeolei).